We begin with the raw amino-acid sequence, 80 residues long: Trefoil factor 3 (80 aa).

The signal sequence occupies residues 1–21 (MAARALCMLGLVLALLSSSSA). The P-type domain occupies 30 to 73 (NQCAVPAKDRVDCGYPHVTPKECNNRGCCFDSRIPGVPWCFKPL). 3 disulfide bridges follow: cysteine 32–cysteine 58, cysteine 42–cysteine 57, and cysteine 52–cysteine 69.

In terms of assembly, monomer. Homodimer; disulfide-linked. As to expression, expressed in goblet cells of the intestines and colon (at protein level). Expressed by goblet cells of small and large intestinal epithelia and also by the uterus. Also expressed in the hypothalamus where it is detected in paraventricular, periventricular and supraoptic nuclei (at protein level).

Its subcellular location is the secreted. The protein localises to the extracellular space. It localises to the extracellular matrix. It is found in the cytoplasm. In terms of biological role, involved in the maintenance and repair of the intestinal mucosa. Promotes the mobility of epithelial cells in healing processes (motogen). The chain is Trefoil factor 3 (TFF3) from Homo sapiens (Human).